The following is a 248-amino-acid chain: 2,3-bisphosphoglycerate-dependent phosphoglycerate mutase (248 aa).

Substrate contacts are provided by residues 9–16 (RHGHSEWN), 22–23 (TG), Arg61, 88–91 (ERHY), Lys99, 115–116 (RR), and 183–184 (GN). The active-site Tele-phosphohistidine intermediate is His10. Glu88 acts as the Proton donor/acceptor in catalysis.

This sequence belongs to the phosphoglycerate mutase family. BPG-dependent PGAM subfamily.

It catalyses the reaction (2R)-2-phosphoglycerate = (2R)-3-phosphoglycerate. Its pathway is carbohydrate degradation; glycolysis; pyruvate from D-glyceraldehyde 3-phosphate: step 3/5. Its function is as follows. Catalyzes the interconversion of 2-phosphoglycerate and 3-phosphoglycerate. This chain is 2,3-bisphosphoglycerate-dependent phosphoglycerate mutase, found in Arthrobacter sp. (strain FB24).